We begin with the raw amino-acid sequence, 438 residues long: Coenzyme A disulfide reductase (438 aa).

8 to 33 (GAVAGGATCASQIRRLDKESDIIIFE) contributes to the FAD binding site. Residues Thr15, Gln19, Arg22, Ser39, and Asn42 each coordinate substrate. Cys43 (nucleophile) is an active-site residue. Cys43 acts as the Redox-active in catalysis. Lys71 contacts substrate. Residue 151–166 (VLVVGAGYVSLEVLEN) participates in NADP(+) binding. 267-277 (TNVPNIYAIGD) is a binding site for FAD. Residue His299 coordinates substrate. Tyr419 lines the FAD pocket. Residue Lys427 coordinates substrate.

This sequence belongs to the class-III pyridine nucleotide-disulfide oxidoreductase family. Homodimer. FAD is required as a cofactor.

The enzyme catalyses NADP(+) + 2 CoA = CoA-disulfide + NADPH + H(+). Functionally, catalyzes specifically the NADPH-dependent reduction of coenzyme A disulfide. This chain is Coenzyme A disulfide reductase, found in Staphylococcus aureus (strain bovine RF122 / ET3-1).